We begin with the raw amino-acid sequence, 115 residues long: Phosphoribosyl-AMP cyclohydrolase (115 aa).

Aspartate 80 serves as a coordination point for Mg(2+). Residue cysteine 81 coordinates Zn(2+). Residues aspartate 82 and aspartate 84 each contribute to the Mg(2+) site. The Zn(2+) site is built by cysteine 97 and cysteine 104.

It belongs to the PRA-CH family. As to quaternary structure, homodimer. Mg(2+) serves as cofactor. The cofactor is Zn(2+).

It is found in the cytoplasm. It carries out the reaction 1-(5-phospho-beta-D-ribosyl)-5'-AMP + H2O = 1-(5-phospho-beta-D-ribosyl)-5-[(5-phospho-beta-D-ribosylamino)methylideneamino]imidazole-4-carboxamide. The protein operates within amino-acid biosynthesis; L-histidine biosynthesis; L-histidine from 5-phospho-alpha-D-ribose 1-diphosphate: step 3/9. Functionally, catalyzes the hydrolysis of the adenine ring of phosphoribosyl-AMP. In Mycobacterium avium (strain 104), this protein is Phosphoribosyl-AMP cyclohydrolase.